The primary structure comprises 340 residues: Tryptophan--tRNA ligase (340 aa).

Residues Arg11–Thr13 and Gly19–His20 each bind ATP. The short motif at Pro12 to His20 is the 'HIGH' region element. Asp140 provides a ligand contact to L-tryptophan. ATP is bound by residues Gly152–Asp154, Leu194, and Lys202–Ser206. The 'KMSKS' region signature appears at Lys202–Ser206.

This sequence belongs to the class-I aminoacyl-tRNA synthetase family. Homodimer.

The protein localises to the cytoplasm. It catalyses the reaction tRNA(Trp) + L-tryptophan + ATP = L-tryptophyl-tRNA(Trp) + AMP + diphosphate + H(+). Catalyzes the attachment of tryptophan to tRNA(Trp). The protein is Tryptophan--tRNA ligase of Streptococcus pyogenes serotype M3 (strain ATCC BAA-595 / MGAS315).